The chain runs to 470 residues: Ubiquitin carboxyl-terminal hydrolase calypso (470 aa).

The UCH catalytic domain maps to 11 to 241 (GWLELESDPG…ITHKLKMLRT (231 aa)). The Nucleophile role is filled by Cys-98. The active-site Proton donor is the His-177. Positions 260 to 280 (ESRSQAEIRETVDKIKKEEQE) form a coiled coil. In terms of domain architecture, ULD spans 392-420 (NYDEFICTFLSMLAYQGELGDLVTQHLVT). Residues 422–470 (RKPSLGGVQNSGSRGVVRNYNKKSTTNGSSPKTPSSKRRRGRTKYRKRK) form a positively charged C-terminal tail required for binding nucleosomes region. The span at 423–434 (KPSLGGVQNSGS) shows a compositional bias: polar residues. The tract at residues 423–470 (KPSLGGVQNSGSRGVVRNYNKKSTTNGSSPKTPSSKRRRGRTKYRKRK) is disordered. The span at 456–470 (SSKRRRGRTKYRKRK) shows a compositional bias: basic residues.

The protein belongs to the peptidase C12 family. BAP1 subfamily. As to quaternary structure, catalytic component of the polycomb repressive deubiquitinase (PR-DUB) complex, at least composed of caly/calypso, Asx and sba (MBD5/6 homolog). The PR-DUB complex associates with nucleosomes to mediate deubiquitination of histone H2AK118ub1 substrates; the association requires the positively charged C-terminal tail of caly, probably due to direct binding of DNA. Interacts (via ULD domain) with Asx (via DEUBAD domain); the interaction produces a stable heterodimer with a composite binding site for ubiquitin. Homodimerizes (via coiled-coil hinge-region between the UCH and ULD domains) to mediate assembly of 2 copies of the caly-Asx heterodimer into a bisymmetric tetramer; dimerization enhances PR-DUB association with nucleosomes.

The protein localises to the nucleus. The catalysed reaction is Thiol-dependent hydrolysis of ester, thioester, amide, peptide and isopeptide bonds formed by the C-terminal Gly of ubiquitin (a 76-residue protein attached to proteins as an intracellular targeting signal).. Catalytic component of the polycomb repressive deubiquitinase (PR-DUB) complex, a complex that specifically mediates deubiquitination of histone H2A monoubiquitinated at 'Lys-119' (H2AK118ub1). Mediates bisymmetric organization of the PR-DUB complex and is involved in association with nucleosomes to mediate deubiquitination. Does not deubiquitinate monoubiquitinated histone H2B. Required to maintain the transcriptionally repressive state of homeotic genes throughout development. The PR-DUB complex has weak or no activity toward 'Lys-48'- and 'Lys-63'-linked polyubiquitin chains. Polycomb group (PcG) protein. The sequence is that of Ubiquitin carboxyl-terminal hydrolase calypso from Culex quinquefasciatus (Southern house mosquito).